Reading from the N-terminus, the 327-residue chain is E3 ubiquitin-protein ligase ZNRF4 (327 aa).

Positions 1-28 are cleaved as a signal peptide; the sequence is MARFAWTRVAPVALVTFWLVLSLSPTDA. The Lumenal segment spans residues 29–150; it reads QVNLSSVDFL…EPCPDPECHP (122 aa). N-linked (GlcNAc...) asparagine glycosylation occurs at Asn31. The chain crosses the membrane as a helical span at residues 151 to 171; sequence VVVASWALARALALAASTLFV. The Cytoplasmic segment spans residues 172–327; sequence LRQLWPWVRG…AQSEATSELS (156 aa). The RING-type; atypical zinc-finger motif lies at 209-252; the sequence is CAICLDDYEEGERLKILPCAHAYHCRCIDPWFSRAAQRSCPLCK. The span at 256–265 shows a compositional bias: polar residues; that stretch reads ASTHDGSTDG. The disordered stretch occupies residues 256 to 279; it reads ASTHDGSTDGSVGGEEPPLPGHRP.

As to quaternary structure, interacts with CANX. Expressed exclusively in spermatids (at protein level).

It localises to the endoplasmic reticulum membrane. The enzyme catalyses S-ubiquitinyl-[E2 ubiquitin-conjugating enzyme]-L-cysteine + [acceptor protein]-L-lysine = [E2 ubiquitin-conjugating enzyme]-L-cysteine + N(6)-ubiquitinyl-[acceptor protein]-L-lysine.. It participates in protein modification; protein ubiquitination. In terms of biological role, E3 ubiquitin-protein ligase that acts as a negative regulator of NOD2 signaling by mediating ubiquitination and degradation of RIPK2. Also catalyzes ubiquitination and proteasomal degradation of CANX within the endoplasmic reticulum. Could have a role in spermatogenesis. The protein is E3 ubiquitin-protein ligase ZNRF4 of Mus musculus (Mouse).